The sequence spans 55 residues: MKIKIICFGKLDKKFYIDAFNDYFKRLEKYADIEIIELKEEINGELNKIKELNSD.

This is an uncharacterized protein from Mycoplasma mycoides.